Here is a 231-residue protein sequence, read N- to C-terminus: Probable septum site-determining protein MinC (231 aa).

The tract at residues 102-125 is disordered; that stretch reads KEKAPRPAPAPQAPAQNTTPVTKT.

It belongs to the MinC family. In terms of assembly, interacts with MinD and FtsZ.

Cell division inhibitor that blocks the formation of polar Z ring septums. Rapidly oscillates between the poles of the cell to destabilize FtsZ filaments that have formed before they mature into polar Z rings. Prevents FtsZ polymerization. In Escherichia coli O6:K15:H31 (strain 536 / UPEC), this protein is Probable septum site-determining protein MinC.